Here is a 215-residue protein sequence, read N- to C-terminus: Glutathione S-transferase D4 (215 aa).

The region spanning 1–80 (MDFYYSPRSS…YLVEKYGKDD (80 aa)) is the GST N-terminal domain. Residues Ser-9, 50 to 52 (HTI), and 64 to 66 (ESR) contribute to the glutathione site. The 122-residue stretch at 86 to 207 (DPQKRALINQ…KGLLQMKTMY (122 aa)) folds into the GST C-terminal domain.

The protein belongs to the GST superfamily. Delta family. As to quaternary structure, homodimer.

The enzyme catalyses RX + glutathione = an S-substituted glutathione + a halide anion + H(+). Conjugation of reduced glutathione to a wide number of exogenous and endogenous hydrophobic electrophiles. May be involved in detoxification. The chain is Glutathione S-transferase D4 from Drosophila melanogaster (Fruit fly).